The following is a 129-amino-acid chain: Small ribosomal subunit protein uS11 (129 aa).

This sequence belongs to the universal ribosomal protein uS11 family. Part of the 30S ribosomal subunit. Interacts with proteins S7 and S18. Binds to IF-3.

Its function is as follows. Located on the platform of the 30S subunit, it bridges several disparate RNA helices of the 16S rRNA. Forms part of the Shine-Dalgarno cleft in the 70S ribosome. The polypeptide is Small ribosomal subunit protein uS11 (Lactiplantibacillus plantarum (strain ATCC BAA-793 / NCIMB 8826 / WCFS1) (Lactobacillus plantarum)).